A 460-amino-acid chain; its full sequence is A-type ATP synthase subunit B (460 aa).

This sequence belongs to the ATPase alpha/beta chains family. Has multiple subunits, A(3), B(3), C, D, E, F, G, I and K(x); there may be a few other subunits as well.

It localises to the cell membrane. Its function is as follows. Component of the A-type ATP synthase that produces ATP from ADP in the presence of a proton gradient across the membrane. The B chain is a regulatory subunit. The chain is A-type ATP synthase subunit B from Methanosarcina mazei (strain ATCC BAA-159 / DSM 3647 / Goe1 / Go1 / JCM 11833 / OCM 88) (Methanosarcina frisia).